The sequence spans 361 residues: Chorismate synthase (361 aa).

Arg-48 lines the NADP(+) pocket. Residues 125 to 127, 238 to 239, Gly-278, 293 to 297, and Arg-319 each bind FMN; these read RSS, NA, and KPTSS.

It belongs to the chorismate synthase family. Homotetramer. FMNH2 is required as a cofactor.

The enzyme catalyses 5-O-(1-carboxyvinyl)-3-phosphoshikimate = chorismate + phosphate. Its pathway is metabolic intermediate biosynthesis; chorismate biosynthesis; chorismate from D-erythrose 4-phosphate and phosphoenolpyruvate: step 7/7. Catalyzes the anti-1,4-elimination of the C-3 phosphate and the C-6 proR hydrogen from 5-enolpyruvylshikimate-3-phosphate (EPSP) to yield chorismate, which is the branch point compound that serves as the starting substrate for the three terminal pathways of aromatic amino acid biosynthesis. This reaction introduces a second double bond into the aromatic ring system. The protein is Chorismate synthase of Aliivibrio fischeri (strain MJ11) (Vibrio fischeri).